A 311-amino-acid polypeptide reads, in one-letter code: Solute carrier family 25 member 36 (311 aa).

Solcar repeat units follow at residues arginine 4–lysine 108, aspartate 116–lysine 203, and serine 224–leucine 308. A run of 6 helical transmembrane segments spans residues leucine 7–leucine 27, leucine 41–asparagine 57, glycine 111–threonine 131, methionine 180–isoleucine 200, phenylalanine 226–proline 246, and glutamine 291–glycine 311.

It belongs to the mitochondrial carrier (TC 2.A.29) family.

The protein localises to the mitochondrion inner membrane. It catalyses the reaction UTP(in) + CTP(out) = UTP(out) + CTP(in). It carries out the reaction CTP(out) + UDP(in) = CTP(in) + UDP(out). The enzyme catalyses UMP(in) + CTP(out) = UMP(out) + CTP(in). The catalysed reaction is dUTP(in) + CTP(out) = dUTP(out) + CTP(in). It catalyses the reaction dUMP(in) + CTP(out) = dUMP(out) + CTP(in). It carries out the reaction CDP(in) + CTP(out) = CDP(out) + CTP(in). The enzyme catalyses CTP(out) + CMP(in) = CTP(in) + CMP(out). The catalysed reaction is dCTP(in) + CTP(out) = dCTP(out) + CTP(in). It catalyses the reaction dCDP(in) + CTP(out) = dCDP(out) + CTP(in). It carries out the reaction dCMP(in) + CTP(out) = dCMP(out) + CTP(in). The enzyme catalyses GTP(in) + CTP(out) = GTP(out) + CTP(in). The catalysed reaction is CTP(out) + GDP(in) = CTP(in) + GDP(out). It catalyses the reaction GMP(in) + CTP(out) = GMP(out) + CTP(in). It carries out the reaction dGTP(in) + CTP(out) = dGTP(out) + CTP(in). The enzyme catalyses dGMP(in) + CTP(out) = dGMP(out) + CTP(in). The catalysed reaction is ITP(in) + CTP(out) = ITP(out) + CTP(in). It catalyses the reaction IDP(in) + CTP(out) = IDP(out) + CTP(in). It carries out the reaction IMP(in) + CTP(out) = IMP(out) + CTP(in). The enzyme catalyses CTP(out) = CTP(in). In terms of biological role, mitochondrial transporter that imports/exports pyrimidine nucleotides into and from mitochondria. Selectively transports cytosine, guanosine, inosine and uridine (deoxy)nucleoside mono-, di-, and triphosphates by antiport mechanism. Catalyzes uniport at much lower rate. May import (deoxy)nucleoside triphosphates in exchange for intramitochondrial (deoxy)nucleoside mono- and diphosphates, thus providing precursors necessary for de novo synthesis of mitochondrial DNA and RNA while exporting products of their catabolism. Participates in mitochondrial genome maintenance, regulation of mitochondrial membrane potential and mitochondrial respiration. This is Solute carrier family 25 member 36 (Slc25a36) from Mus musculus (Mouse).